Consider the following 509-residue polypeptide: Histidine ammonia-lyase (509 aa).

Residues 142 to 144 constitute a cross-link (5-imidazolinone (Ala-Gly)); sequence ASG. A 2,3-didehydroalanine (Ser) modification is found at S143.

The protein belongs to the PAL/histidase family. Post-translationally, contains an active site 4-methylidene-imidazol-5-one (MIO), which is formed autocatalytically by cyclization and dehydration of residues Ala-Ser-Gly.

It localises to the cytoplasm. The enzyme catalyses L-histidine = trans-urocanate + NH4(+). It functions in the pathway amino-acid degradation; L-histidine degradation into L-glutamate; N-formimidoyl-L-glutamate from L-histidine: step 1/3. This is Histidine ammonia-lyase from Pseudomonas aeruginosa (strain UCBPP-PA14).